Consider the following 312-residue polypeptide: tRNA pseudouridine synthase B (312 aa).

Asp38 (nucleophile) is an active-site residue.

It belongs to the pseudouridine synthase TruB family. Type 1 subfamily.

It carries out the reaction uridine(55) in tRNA = pseudouridine(55) in tRNA. In terms of biological role, responsible for synthesis of pseudouridine from uracil-55 in the psi GC loop of transfer RNAs. The chain is tRNA pseudouridine synthase B from Syntrophus aciditrophicus (strain SB).